The primary structure comprises 389 residues: MNLHEYQSKQLFADYGLPVSTGFACDTPEEVAAKAKEIGGDKWVVKAQVHAGGRGKAGGVKLVDTPEDAAAFAKKWLGKQLVTFQTDEHGQPVSKILVETCTDIAKELYLSAVLDRASRRVVFMASTEGGVDIETVAEETPEKILKAEIDPLVGAQPYQAREIAFKLGLEGKQVNQFAKIFVGLAKLFVDKDLALIEVNPLVITDTGDLHCLDAKINVDGSALYRHPDIKALDDPSQEDERERRAAEWDLNYVALEGNIGCMVNGAGLAMGTMDLVKLKGGAPANFLDVGGGATKERVTEAFKIILSDDQVKGVLVNIFGGIVRCDLIAEGIIGAVEEVGVTVPVVVRLEGNNAELGSQKLAESGMNIIAAQSFDDAAEQVVKAVGGAA.

The ATP-grasp domain maps to 9-244 (KQLFADYGLP…PSQEDERERR (236 aa)). ATP is bound by residues Lys46, 53 to 55 (GRG), Glu99, Thr102, and Glu107. 2 residues coordinate Mg(2+): Asn199 and Asp213. Residues Asn264 and 321-323 (GIV) contribute to the substrate site.

It belongs to the succinate/malate CoA ligase beta subunit family. In terms of assembly, heterotetramer of two alpha and two beta subunits. Mg(2+) serves as cofactor.

It catalyses the reaction succinate + ATP + CoA = succinyl-CoA + ADP + phosphate. The enzyme catalyses GTP + succinate + CoA = succinyl-CoA + GDP + phosphate. It functions in the pathway carbohydrate metabolism; tricarboxylic acid cycle; succinate from succinyl-CoA (ligase route): step 1/1. Its function is as follows. Succinyl-CoA synthetase functions in the citric acid cycle (TCA), coupling the hydrolysis of succinyl-CoA to the synthesis of either ATP or GTP and thus represents the only step of substrate-level phosphorylation in the TCA. The beta subunit provides nucleotide specificity of the enzyme and binds the substrate succinate, while the binding sites for coenzyme A and phosphate are found in the alpha subunit. The sequence is that of Succinate--CoA ligase [ADP-forming] subunit beta from Alcanivorax borkumensis (strain ATCC 700651 / DSM 11573 / NCIMB 13689 / SK2).